The primary structure comprises 477 residues: Putative multidrug resistance protein MdtD (477 aa).

Transmembrane regions (helical) follow at residues 13-33 (LWIV…VNTA), 50-70 (SVIV…GWLA), 73-93 (VGVQ…SILC), 107-127 (VVQG…VMKI), 139-159 (FVTL…GFLV), 166-186 (WIFL…LLLM), 196-216 (FDIS…LALD), 220-240 (GMGL…AALA), 268-288 (LTAS…TPLF), 291-311 (VGMG…IIGS), 326-348 (GYRN…FPLV), 352-374 (GWIW…RFSA), 394-414 (LLSM…GILI), and 432-452 (AFIY…LAFA).

The protein belongs to the major facilitator superfamily. TCR/Tet family.

The protein localises to the cell inner membrane. The polypeptide is Putative multidrug resistance protein MdtD (Serratia proteamaculans (strain 568)).